Consider the following 66-residue polypeptide: Large ribosomal subunit protein bL35 (66 aa).

Positions 20–40 are disordered; that stretch reads GKVKHAQRGKRHGMIKRTKKQ.

The protein belongs to the bacterial ribosomal protein bL35 family.

In Nitrobacter winogradskyi (strain ATCC 25391 / DSM 10237 / CIP 104748 / NCIMB 11846 / Nb-255), this protein is Large ribosomal subunit protein bL35.